A 588-amino-acid chain; its full sequence is Mediator of RNA polymerase II transcription subunit 26 (588 aa).

Positions 10–87 (QMRDRLLQAI…RSWQKLIEPV (78 aa)) constitute a TFIIS N-terminal domain. Disordered stretches follow at residues 112 to 393 (RPEM…YTVN) and 412 to 441 (KLTF…PTEQ). The segment covering 123–133 (SIHDLKNRNDI) has biased composition (basic and acidic residues). Polar residues predominate over residues 179–191 (PLPTNGISGSPES). Residues 207 to 218 (SRLEPSDNEKHS) are compositionally biased toward basic and acidic residues. A compositionally biased stretch (pro residues) spans 314-325 (SPLPLAQPPTPP). Phosphoserine is present on residues serine 435 and serine 458.

Belongs to the Mediator complex subunit 26 family. Component of the Mediator complex, which is composed of MED1, MED4, MED6, MED7, MED8, MED9, MED10, MED11, MED12, MED13, MED13L, MED14, MED15, MED16, MED17, MED18, MED19, MED20, MED21, MED22, MED23, MED24, MED25, MED26, MED27, MED29, MED30, MED31, CCNC, CDK8 and CDC2L6/CDK11. The MED12, MED13, CCNC and CDK8 subunits form a distinct module termed the CDK8 module. Mediator containing the CDK8 module is less active than Mediator lacking this module in supporting transcriptional activation. Individual preparations of the Mediator complex lacking one or more distinct subunits have been variously termed ARC, CRSP, DRIP, PC2, SMCC and TRAP. Interacts with CEBPB (when not methylated).

The protein localises to the nucleus. In terms of biological role, component of the Mediator complex, a coactivator involved in the regulated transcription of nearly all RNA polymerase II-dependent genes. Mediator functions as a bridge to convey information from gene-specific regulatory proteins to the basal RNA polymerase II transcription machinery. Mediator is recruited to promoters by direct interactions with regulatory proteins and serves as a scaffold for the assembly of a functional pre-initiation complex with RNA polymerase II and the general transcription factors. This Mus musculus (Mouse) protein is Mediator of RNA polymerase II transcription subunit 26 (Med26).